We begin with the raw amino-acid sequence, 333 residues long: tRNA(Ile)-lysidine synthase (333 aa).

An ATP-binding site is contributed by 25–30 (SGGPDS).

It belongs to the tRNA(Ile)-lysidine synthase family.

It localises to the cytoplasm. The catalysed reaction is cytidine(34) in tRNA(Ile2) + L-lysine + ATP = lysidine(34) in tRNA(Ile2) + AMP + diphosphate + H(+). Functionally, ligates lysine onto the cytidine present at position 34 of the AUA codon-specific tRNA(Ile) that contains the anticodon CAU, in an ATP-dependent manner. Cytidine is converted to lysidine, thus changing the amino acid specificity of the tRNA from methionine to isoleucine. The chain is tRNA(Ile)-lysidine synthase from Ureaplasma parvum serovar 3 (strain ATCC 700970).